Consider the following 279-residue polypeptide: Acyl-[acyl-carrier-protein]--UDP-N-acetylglucosamine O-acyltransferase (279 aa).

This sequence belongs to the transferase hexapeptide repeat family. LpxA subfamily. Homotrimer.

Its subcellular location is the cytoplasm. It catalyses the reaction a (3R)-hydroxyacyl-[ACP] + UDP-N-acetyl-alpha-D-glucosamine = a UDP-3-O-[(3R)-3-hydroxyacyl]-N-acetyl-alpha-D-glucosamine + holo-[ACP]. The protein operates within glycolipid biosynthesis; lipid IV(A) biosynthesis; lipid IV(A) from (3R)-3-hydroxytetradecanoyl-[acyl-carrier-protein] and UDP-N-acetyl-alpha-D-glucosamine: step 1/6. Involved in the biosynthesis of lipid A, a phosphorylated glycolipid that anchors the lipopolysaccharide to the outer membrane of the cell. This is Acyl-[acyl-carrier-protein]--UDP-N-acetylglucosamine O-acyltransferase from Chlamydia pneumoniae (Chlamydophila pneumoniae).